The sequence spans 670 residues: Probable potassium transport system protein Kup (670 aa).

The disordered stretch occupies residues 1–42 (MSQIPSPNDPPPAGAVPTSGAPAGPSATPAPSPTAGFSLPEH). The span at 15-35 (AVPTSGAPAGPSATPAPSPTA) shows a compositional bias: low complexity. The next 12 helical transmembrane spans lie at 51–71 (LAAL…TSPL), 91–111 (VLGV…FKYM), 144–164 (VLLM…IITP), 180–200 (PAME…LFLF), 208–228 (VGAV…VLGV), 254–274 (GWHG…GEAL), 290–310 (WLGL…ALLL), 322–342 (LLAP…AAIV), 380–400 (IYLP…VLGF), 406–426 (LASA…LLFH), 440–460 (AWPL…ANVV), and 464–484 (DGGW…STWK).

This sequence belongs to the HAK/KUP transporter (TC 2.A.72) family.

The protein localises to the cell inner membrane. It carries out the reaction K(+)(in) + H(+)(in) = K(+)(out) + H(+)(out). In terms of biological role, transport of potassium into the cell. Likely operates as a K(+):H(+) symporter. The sequence is that of Probable potassium transport system protein Kup from Anaeromyxobacter dehalogenans (strain 2CP-C).